Reading from the N-terminus, the 1203-residue chain is Protein patched homolog 2 (1203 aa).

The Cytoplasmic portion of the chain corresponds to 1-57 (MTRSPPLRELPPSYTPPARTAAPQILAGSLKAPLWLRAYFQGLLFSLGCGIQRHCGK). A helical transmembrane segment spans residues 58–78 (VLFLGLLAFGALALGLRMAII). At 79 to 392 (ETNLEQLWVE…LDDILHAFSE (314 aa)) the chain is on the extracellular side. Residue Asn370 is glycosylated (N-linked (GlcNAc...) asparagine). A helical membrane pass occupies residues 393–413 (VSAARVVGGYLLMLAYACVTM). Residues 394 to 552 (SAARVVGGYL…MLVFPAILSL (159 aa)) enclose the SSD domain. Over 414 to 428 (LRWDCAQSQGSVGLA) the chain is Cytoplasmic. Residues 429 to 449 (GVLLVALAVASGLGLCALLGI) form a helical membrane-spanning segment. Over 450 to 457 (TFNAATTQ) the chain is Extracellular. Residues 458–478 (VLPFLALGIGVDDVFLLAHAF) traverse the membrane as a helical segment. Residues 479–501 (TEALPGTPLQERMGECLQRTGTS) lie on the Cytoplasmic side of the membrane. Residues 502-522 (VVLTSINNMAAFLMAALVPIP) form a helical membrane-spanning segment. Topologically, residues 523–531 (ALRAFSLQA) are extracellular. A helical membrane pass occupies residues 532–552 (AIVVGCTFVAVMLVFPAILSL). The Cytoplasmic segment spans residues 553–686 (DLRRRHCQRL…APLLLQSHAK (134 aa)). A helical membrane pass occupies residues 687–707 (AIVLVLFGALLGLSLYGATLV). Over 708–963 (QDGLALTDVV…WEQYLGLRRC (256 aa)) the chain is Extracellular. Asn812 carries N-linked (GlcNAc...) asparagine glycosylation. The chain crosses the membrane as a helical span at residues 964 to 984 (FLLAVCILLVCTFLVCALLLL). The Cytoplasmic segment spans residues 985 to 991 (NPWTAGL). A helical transmembrane segment spans residues 992–1012 (IVLVLAMMTVELFGIMGFLGI). Lys1013 is a topological domain (extracellular). A helical membrane pass occupies residues 1014-1034 (LSAIPVVILVASVGIGVEFTV). At 1035–1064 (HVALGFLTTQGSRNLRAAHALEHTFAPVTD) the chain is on the cytoplasmic side. Residues 1065-1085 (GAISTLLGLLMLAGSHFDFIV) form a helical membrane-spanning segment. Residues 1086-1093 (RYFFAALT) are Extracellular-facing. The helical transmembrane segment at 1094–1114 (VLTLLGLLHGLVLLPVLLSIL) threads the bilayer. The Cytoplasmic portion of the chain corresponds to 1115–1203 (GPPPEVIQMY…SSRGPGPATG (89 aa)). Residues 1171–1203 (GAYIHPAPDEPPWSPAATSSGNLSSRGPGPATG) are disordered. Residues 1186-1195 (AATSSGNLSS) show a composition bias toward polar residues.

Belongs to the patched family.

Its subcellular location is the membrane. Plays a role in the control of cellular growth. May have a role in epidermal development. May act as a receptor for Sonic hedgehog (SHH). The polypeptide is Protein patched homolog 2 (PTCH2) (Homo sapiens (Human)).